Consider the following 128-residue polypeptide: Fluoride-specific ion channel FluC (128 aa).

A run of 4 helical transmembrane segments spans residues 4–24, 37–57, 65–85, and 101–121; these read VMGI…RYAI, FGTF…WSFF, TFRL…STFS, and FGYL…GFFI. Residues G76 and T79 each contribute to the Na(+) site.

It belongs to the fluoride channel Fluc/FEX (TC 1.A.43) family.

It is found in the cell inner membrane. It carries out the reaction fluoride(in) = fluoride(out). Na(+) is not transported, but it plays an essential structural role and its presence is essential for fluoride channel function. Its function is as follows. Fluoride-specific ion channel. Important for reducing fluoride concentration in the cell, thus reducing its toxicity. This chain is Fluoride-specific ion channel FluC, found in Desulfotalea psychrophila (strain LSv54 / DSM 12343).